The chain runs to 560 residues: Membrane protein insertase YidC (560 aa).

6 helical membrane passes run 5–25 (IINL…WQYF), 334–354 (AIDF…MNFF), 357–377 (YVGN…LLMF), 431–451 (LPIL…YVTI), 476–496 (LFGL…WPIL), and 522–542 (FMPL…LIYW).

The protein belongs to the OXA1/ALB3/YidC family. Type 1 subfamily. As to quaternary structure, interacts with the Sec translocase complex via SecD. Specifically interacts with transmembrane segments of nascent integral membrane proteins during membrane integration.

It is found in the cell inner membrane. In terms of biological role, required for the insertion and/or proper folding and/or complex formation of integral membrane proteins into the membrane. Involved in integration of membrane proteins that insert both dependently and independently of the Sec translocase complex, as well as at least some lipoproteins. Aids folding of multispanning membrane proteins. The protein is Membrane protein insertase YidC of Rickettsia felis (strain ATCC VR-1525 / URRWXCal2) (Rickettsia azadi).